Reading from the N-terminus, the 224-residue chain is Glycerol-3-phosphate acyltransferase (224 aa).

Transmembrane regions (helical) follow at residues 3–23 (IFLS…IGSL), 54–74 (VFGY…VVFA), 90–112 (LYFY…PIYF), 127–147 (LISI…LLLF), 152–172 (VSLS…IPWM), and 183–203 (GFGQ…LIFW).

The protein belongs to the PlsY family. As to quaternary structure, probably interacts with PlsX.

It localises to the cell membrane. The catalysed reaction is an acyl phosphate + sn-glycerol 3-phosphate = a 1-acyl-sn-glycero-3-phosphate + phosphate. The protein operates within lipid metabolism; phospholipid metabolism. Its function is as follows. Catalyzes the transfer of an acyl group from acyl-phosphate (acyl-PO(4)) to glycerol-3-phosphate (G3P) to form lysophosphatidic acid (LPA). This enzyme utilizes acyl-phosphate as fatty acyl donor, but not acyl-CoA or acyl-ACP. This chain is Glycerol-3-phosphate acyltransferase, found in Mycoplasmopsis synoviae (strain 53) (Mycoplasma synoviae).